Consider the following 609-residue polypeptide: MIPSYDPNDTEAGLKLLEDLTTNAEAIQQQVLHQILSQNSGTQYLRAFLDGEADKNQQSFKNKVPVVNYDDVKPFIQRIADGESSDIVSAQPITELLTSSGTSAGKPKLMPSTAEELERKTFFYSMLVPIMNKYVDGLDEGKGMYLLFIKPEIKTPSGLMARPVLTSYYKSQHFRNRPFNKYNVYTSPDQTILCQDSKQSMYCQLLCGLVQRSHVLRVGAVFASAFLRAVKFLEDHYKELCADIRTGTVTSWITDSSCRDSVLSILNGPNQELADEIESECAEKSWEGILRRIWPKAKYVEVIVTGSMAQYIPTLEFYSGGLPLVSTMYASSECYFGINLNPLCDPADVSYTLLPNMAYFEFLPVDDKSHEEIHFATHSNTDDDDDALKEDLIVNLVNVEVGQYYEIVITTFTGLYRYRVGDILKVTGFHNKAPQFRFVQRRNVVLSIDTDKTSEEDLLNAVTQAKLNHLQHPSSLLLTEYTSYADTSSIPGHYVLFWELKPRHSNDPPKLDDKTMEDCCSEVEDCLDYVYRRCRNRDKSIGPLEIRVVSLGTFDSLMDFCVSQGSSLNQYKTPRCVKSGGALEILDSRVIGRFFSKRVPQWEPLGLDS.

It belongs to the IAA-amido conjugating enzyme family.

Functionally, catalyzes the synthesis of indole-3-acetic acid (IAA)-amino acid conjugates, providing a mechanism for the plant to cope with the presence of excess auxin. Strongly reactive with Glu, Gln, Trp, Asp, Ala, Leu, Phe, Gly, Tyr, Met, Ile and Val. Appears to favor Glu over Asp while the other GH3 favor Asp over Glu. Little or no product formation with His, Ser, Thr, Arg, Lys, or Cys. Also active on pyruvic and butyric acid analogs of IAA, PAA and the synthetic auxin naphthaleneacetic acid (NAA). The two chlorinated synthetic auxin herbicides 2,4-D and 3,6-dichloro-o-anisic acid (dicamba) cannot be used as substrates. In Arabidopsis thaliana (Mouse-ear cress), this protein is Indole-3-acetic acid-amido synthetase GH3.17 (GH3.17).